Reading from the N-terminus, the 468-residue chain is MATEYALRMGDGKRIFLTKEKIREELEAGAANAADLGEIPALSGDEIDRLAEILMMPGKAVSVEQGMEVPVTHDIGTIRLDGDQGNSGVGIPSSRLVGCMMHERAFGADTMELGHIDYSFKPVKPVVSNECQAMEVCQQNMIIPLFYGAMPNMGLYYTPDGPFENPGDLMKAFKIQEAWESMEHAADHLTRDTVWIMQKLFASGADGVNFDTTAAAGDGDFYGTLHAVEALRKEFPAMHIEVGMAGEMVLGMHGNLQYEGVTLAGLWPHQQASLVAKAGANVFGPVVNTNTSKTSPWNLARAVTFIKEAVKVSSLPCHVDMGMGVGGIPMLETPPIDAVTRASKAMVEVAGVDGIOIGVGDPLGMPISHIMASGMTGIRAAGDLVARMQFSKNMRIKEAKKYVAKKLDVDVMDLADEHVMRELREELDIGVITSVPGAAKGIAAKMNIEKLLDVRINSCELFRKQTGR.

Position 356 (Pyl356) is a non-standard amino acid, pyrrolysine.

The protein belongs to the dimethylamine methyltransferase family.

It catalyses the reaction Co(I)-[dimethylamine-specific corrinoid protein] + dimethylamine + H(+) = methyl-Co(III)-[dimethylamine-specific corrinoid protein] + methylamine. It participates in one-carbon metabolism; methanogenesis from dimethylamine. Its function is as follows. Catalyzes the transfer of a methyl group from dimethylamine to the corrinoid cofactor of MtbC. The sequence is that of Dimethylamine methyltransferase MtbB2 (mtbB2) from Methanosarcina acetivorans (strain ATCC 35395 / DSM 2834 / JCM 12185 / C2A).